We begin with the raw amino-acid sequence, 244 residues long: 1-(5-phosphoribosyl)-5-[(5-phosphoribosylamino)methylideneamino] imidazole-4-carboxamide isomerase (244 aa).

The active-site Proton acceptor is D10. D129 (proton donor) is an active-site residue.

The protein belongs to the HisA/HisF family.

It is found in the cytoplasm. It catalyses the reaction 1-(5-phospho-beta-D-ribosyl)-5-[(5-phospho-beta-D-ribosylamino)methylideneamino]imidazole-4-carboxamide = 5-[(5-phospho-1-deoxy-D-ribulos-1-ylimino)methylamino]-1-(5-phospho-beta-D-ribosyl)imidazole-4-carboxamide. It functions in the pathway amino-acid biosynthesis; L-histidine biosynthesis; L-histidine from 5-phospho-alpha-D-ribose 1-diphosphate: step 4/9. The polypeptide is 1-(5-phosphoribosyl)-5-[(5-phosphoribosylamino)methylideneamino] imidazole-4-carboxamide isomerase (Rhodococcus opacus (strain B4)).